The sequence spans 293 residues: MKI67 FHA domain-interacting nucleolar phosphoprotein (293 aa).

Residue alanine 2 is modified to N-acetylalanine. Lysine 38 participates in a covalent cross-link: Glycyl lysine isopeptide (Lys-Gly) (interchain with G-Cter in SUMO2). One can recognise an RRM domain in the interval 45-123 (GVVYVRHLPN…RLLECHFMPP (79 aa)). Position 114 is an omega-N-methylarginine; by PRMT1 and PRMT8 (arginine 114). Residue lysine 139 forms a Glycyl lysine isopeptide (Lys-Gly) (interchain with G-Cter in SUMO2) linkage. Serine 145 bears the Phosphoserine mark. Glycyl lysine isopeptide (Lys-Gly) (interchain with G-Cter in SUMO2) cross-links involve residues lysine 179 and lysine 192. The segment covering 197–207 (SKTNRQTSTKG) has biased composition (polar residues). The disordered stretch occupies residues 197–239 (SKTNRQTSTKGQVLRKKKKKVSGTLDTPEKTVDSQGPTPVCTP). Serine 218 is subject to Phosphoserine. Position 223 is a phosphothreonine (threonine 223). The tract at residues 226 to 269 (KTVDSQGPTPVCTPTFLERRKSQVAELNDDDKDDEIVFKQPISC) is interaction with MKI67. The residue at position 230 (serine 230) is a Phosphoserine. Phosphothreonine is present on residues threonine 234 and threonine 238. Omega-N-methylated arginine; by PRMT1 and PRMT8 occurs at positions 244 and 245. Serine 247 bears the Phosphoserine mark. Residue lysine 271 forms a Glycyl lysine isopeptide (Lys-Gly) (interchain with G-Cter in SUMO1); alternate linkage. A Glycyl lysine isopeptide (Lys-Gly) (interchain with G-Cter in SUMO2); alternate cross-link involves residue lysine 271. The segment at 271-293 (KEEIQETQTPTHSRKKRRRSSNQ) is disordered. Position 279 is a phosphothreonine (threonine 279). The span at 282–293 (HSRKKRRRSSNQ) shows a compositional bias: basic residues. Arginine 284 carries the omega-N-methylarginine; by PRMT1 and PRMT8 modification.

As to quaternary structure, binds to the FHA domain of MKI67; this interaction is enhanced in mitosis. Post-translationally, sequentially phosphorylated on Thr-238, Thr-234 and Ser-230. Thr-234 is phosphorylated only when Thr-238 is phosphorylated. Likewise, phosphorylation at Ser-230 requires that Thr-234 and Thr-238 are phosphorylated. Phosphorylation enhances MKI67 binding.

The protein localises to the nucleus. It is found in the nucleolus. It localises to the chromosome. The polypeptide is MKI67 FHA domain-interacting nucleolar phosphoprotein (NIFK) (Homo sapiens (Human)).